Reading from the N-terminus, the 386-residue chain is Succinate--CoA ligase [ADP-forming] subunit beta (386 aa).

One can recognise an ATP-grasp domain in the interval 9-244 (KQILKKYGAV…LNEEDPTEID (236 aa)). ATP-binding positions include K46, 53 to 55 (GRG), E99, S102, and E107. Positions 199 and 213 each coordinate Mg(2+). Substrate-binding positions include N264 and 321–323 (GIM).

Belongs to the succinate/malate CoA ligase beta subunit family. In terms of assembly, heterotetramer of two alpha and two beta subunits. Requires Mg(2+) as cofactor.

It catalyses the reaction succinate + ATP + CoA = succinyl-CoA + ADP + phosphate. It carries out the reaction GTP + succinate + CoA = succinyl-CoA + GDP + phosphate. It participates in carbohydrate metabolism; tricarboxylic acid cycle; succinate from succinyl-CoA (ligase route): step 1/1. In terms of biological role, succinyl-CoA synthetase functions in the citric acid cycle (TCA), coupling the hydrolysis of succinyl-CoA to the synthesis of either ATP or GTP and thus represents the only step of substrate-level phosphorylation in the TCA. The beta subunit provides nucleotide specificity of the enzyme and binds the substrate succinate, while the binding sites for coenzyme A and phosphate are found in the alpha subunit. The chain is Succinate--CoA ligase [ADP-forming] subunit beta from Pelagibacter ubique (strain HTCC1062).